A 604-amino-acid polypeptide reads, in one-letter code: Replication protein A 70 kDa DNA-binding subunit B (604 aa).

The segment at residues 170 to 256 is a DNA-binding region (OB); the sequence is WTIKVRVTNK…QNDYEMTLNE (87 aa). The segment at 468 to 488 adopts a C4-type zinc-finger fold; that stretch reads CKTCNKKVTEAMDSGYWCESC.

The protein belongs to the replication factor A protein 1 family. In terms of assembly, heterotrimer of RPA1, RPA2 and RPA3 (canonical replication protein A complex).

It localises to the nucleus. Functionally, component of the replication protein A complex (RPA) required for DNA recombination, repair and replication. The activity of RPA is mediated by single-stranded DNA binding and protein interactions. Probably involved in repair of double-strand DNA breaks (DSBs) induced by genotoxic stresses. The protein is Replication protein A 70 kDa DNA-binding subunit B (RPA1B) of Arabidopsis thaliana (Mouse-ear cress).